Consider the following 311-residue polypeptide: Ferrochelatase (311 aa).

H179 and E260 together coordinate Fe cation.

This sequence belongs to the ferrochelatase family.

The protein localises to the cytoplasm. The enzyme catalyses heme b + 2 H(+) = protoporphyrin IX + Fe(2+). Its pathway is porphyrin-containing compound metabolism; protoheme biosynthesis; protoheme from protoporphyrin-IX: step 1/1. In terms of biological role, catalyzes the ferrous insertion into protoporphyrin IX. The polypeptide is Ferrochelatase (Helicobacter hepaticus (strain ATCC 51449 / 3B1)).